A 160-amino-acid polypeptide reads, in one-letter code: E3 ubiquitin ligase complex SCF subunit sconC (160 aa).

The segment at 101-160 is interaction with the F-box domain of F-box proteins; the sequence is ILAANYLDIKALLDVGCKTVANMIKGKSPEEIRKTFNIQNDFTPEEEDQIRRENEWAEDR.

The protein belongs to the SKP1 family. Component of the SCF (SKP1-CUL1-F-box protein) E3 ubiquitin ligase complexes.

It functions in the pathway protein modification; protein ubiquitination. Its function is as follows. Essential component of the SCF (SKP1-CUL1-F-box protein) E3 ubiquitin ligase complexes, which mediate the ubiquitination and subsequent proteasomal degradation of target proteins. Controls sulfur metabolite repression, probably by mediating the inactivation or degradation of the metR transcription factor. The protein is E3 ubiquitin ligase complex SCF subunit sconC (sconC) of Talaromyces stipitatus (strain ATCC 10500 / CBS 375.48 / QM 6759 / NRRL 1006) (Penicillium stipitatum).